The chain runs to 192 residues: Signal peptidase complex catalytic subunit sec11 (192 aa).

Topologically, residues 1–18 (MLSFLSSNLSSTRQSLAQ) are cytoplasmic. Residues 19–39 (VLNFALVLSTAFMLWKGLSVF) traverse the membrane as a helical; Signal-anchor for type II membrane protein segment. Over 40–192 (TASSSPIVVV…GLMVILQREQ (153 aa)) the chain is Lumenal. Active-site charge relay system residues include Ser53, His92, and Asp133. The segment at 177 to 188 (VLLGIMGLMVIL) is C-terminal short (CTS) helix.

The protein belongs to the peptidase S26B family. Component of the signal peptidase complex (SPC) composed of a catalytic subunit SEC11 and three accessory subunits SPC1, SPC2 and SPC3. The complex induces a local thinning of the ER membrane which is used to measure the length of the signal peptide (SP) h-region of protein substrates. This ensures the selectivity of the complex towards h-regions shorter than 18-20 amino acids. SPC associates with the translocon complex.

It is found in the endoplasmic reticulum membrane. The catalysed reaction is Cleavage of hydrophobic, N-terminal signal or leader sequences from secreted and periplasmic proteins.. Catalytic component of the signal peptidase complex (SPC) which catalyzes the cleavage of N-terminal signal sequences from nascent proteins as they are translocated into the lumen of the endoplasmic reticulum. Specifically cleaves N-terminal signal peptides that contain a hydrophobic alpha-helix (h-region) shorter than 18-20 amino acids. The sequence is that of Signal peptidase complex catalytic subunit sec11 (sec11) from Neosartorya fischeri (strain ATCC 1020 / DSM 3700 / CBS 544.65 / FGSC A1164 / JCM 1740 / NRRL 181 / WB 181) (Aspergillus fischerianus).